An 85-amino-acid chain; its full sequence is Small ribosomal subunit protein bS18 (85 aa).

It belongs to the bacterial ribosomal protein bS18 family. As to quaternary structure, part of the 30S ribosomal subunit. Forms a tight heterodimer with protein bS6.

Its function is as follows. Binds as a heterodimer with protein bS6 to the central domain of the 16S rRNA, where it helps stabilize the platform of the 30S subunit. In Helicobacter pylori (strain Shi470), this protein is Small ribosomal subunit protein bS18.